Reading from the N-terminus, the 404-residue chain is Cysteine desulfurase IscS (404 aa).

Pyridoxal 5'-phosphate is bound by residues 75–76 (AT), asparagine 155, glutamine 183, and 203–205 (SAH). Position 206 is an N6-(pyridoxal phosphate)lysine (lysine 206). Threonine 243 is a pyridoxal 5'-phosphate binding site. Cysteine 328 acts as the Cysteine persulfide intermediate in catalysis. Cysteine 328 serves as a coordination point for [2Fe-2S] cluster.

Belongs to the class-V pyridoxal-phosphate-dependent aminotransferase family. NifS/IscS subfamily. In terms of assembly, homodimer. Forms a heterotetramer with IscU, interacts with other sulfur acceptors. Pyridoxal 5'-phosphate is required as a cofactor.

Its subcellular location is the cytoplasm. The catalysed reaction is (sulfur carrier)-H + L-cysteine = (sulfur carrier)-SH + L-alanine. It functions in the pathway cofactor biosynthesis; iron-sulfur cluster biosynthesis. Functionally, master enzyme that delivers sulfur to a number of partners involved in Fe-S cluster assembly, tRNA modification or cofactor biosynthesis. Catalyzes the removal of elemental sulfur atoms from cysteine to produce alanine. Functions as a sulfur delivery protein for Fe-S cluster synthesis onto IscU, an Fe-S scaffold assembly protein, as well as other S acceptor proteins. This is Cysteine desulfurase IscS from Shewanella piezotolerans (strain WP3 / JCM 13877).